A 503-amino-acid chain; its full sequence is Maturase K (503 aa).

It belongs to the intron maturase 2 family. MatK subfamily.

The protein resides in the plastid. The protein localises to the chloroplast. Its function is as follows. Usually encoded in the trnK tRNA gene intron. Probably assists in splicing its own and other chloroplast group II introns. This Actinodium cunninghamii (Albany daisy) protein is Maturase K.